Here is a 187-residue protein sequence, read N- to C-terminus: Elongation factor P (187 aa).

The protein belongs to the elongation factor P family.

It localises to the cytoplasm. The protein operates within protein biosynthesis; polypeptide chain elongation. Functionally, involved in peptide bond synthesis. Stimulates efficient translation and peptide-bond synthesis on native or reconstituted 70S ribosomes in vitro. Probably functions indirectly by altering the affinity of the ribosome for aminoacyl-tRNA, thus increasing their reactivity as acceptors for peptidyl transferase. This Mycobacterium sp. (strain JLS) protein is Elongation factor P.